Reading from the N-terminus, the 509-residue chain is Photosystem II CP47 reaction center protein (509 aa).

Transmembrane regions (helical) follow at residues 21 to 36 (SVHLMHTALVAGWAGS), 101 to 115 (IVLSGLLFLAAVWHW), 140 to 156 (GIHLFLSGLLCFGFGAF), 203 to 218 (IAAGIVGIIAGLFHLT), 237 to 252 (VLSSSIAAVFFAAFVV), and 457 to 472 (VFALLFFFGHLWHGAR).

The protein belongs to the PsbB/PsbC family. PsbB subfamily. PSII is composed of 1 copy each of membrane proteins PsbA, PsbB, PsbC, PsbD, PsbE, PsbF, PsbH, PsbI, PsbJ, PsbK, PsbL, PsbM, PsbT, PsbX, PsbY, PsbZ, Psb30/Ycf12, peripheral proteins PsbO, CyanoQ (PsbQ), PsbU, PsbV and a large number of cofactors. It forms dimeric complexes. It depends on Binds multiple chlorophylls. PSII binds additional chlorophylls, carotenoids and specific lipids. as a cofactor.

The protein localises to the cellular thylakoid membrane. Functionally, one of the components of the core complex of photosystem II (PSII). It binds chlorophyll and helps catalyze the primary light-induced photochemical processes of PSII. PSII is a light-driven water:plastoquinone oxidoreductase, using light energy to abstract electrons from H(2)O, generating O(2) and a proton gradient subsequently used for ATP formation. This chain is Photosystem II CP47 reaction center protein, found in Nostoc sp. (strain PCC 7120 / SAG 25.82 / UTEX 2576).